The chain runs to 509 residues: Histidine--tRNA ligase, cytoplasmic (509 aa).

The residue at position 2 (Ala2) is an N-acetylalanine. The WHEP-TRS domain occupies 3-59; that stretch reads DRAALEELVRLQGAHVRGLKEQKASAEQIEEEVTKLLKLKAQLGQDEGKQKFVLKTP. Ser66 carries the post-translational modification Phosphoserine. L-histidine contacts are provided by residues 130–132, Arg157, Gln173, Asp177, Arg326, and 330–331; these read DLT and YY. Ser356 carries the post-translational modification Phosphoserine.

The protein belongs to the class-II aminoacyl-tRNA synthetase family. Homodimer.

The protein localises to the cytoplasm. It carries out the reaction tRNA(His) + L-histidine + ATP = L-histidyl-tRNA(His) + AMP + diphosphate + H(+). In terms of biological role, catalyzes the ATP-dependent ligation of histidine to the 3'-end of its cognate tRNA, via the formation of an aminoacyl-adenylate intermediate (His-AMP). Plays a role in axon guidance. This chain is Histidine--tRNA ligase, cytoplasmic (Hars1), found in Mus musculus (Mouse).